A 436-amino-acid chain; its full sequence is 3-ketoacyl-CoA thiolase (436 aa).

Cys99 functions as the Acyl-thioester intermediate in the catalytic mechanism. Residues His392 and Cys422 each act as proton acceptor in the active site.

The protein belongs to the thiolase-like superfamily. Thiolase family. As to quaternary structure, heterotetramer of two alpha chains (FadJ) and two beta chains (FadI).

Its subcellular location is the cytoplasm. The catalysed reaction is an acyl-CoA + acetyl-CoA = a 3-oxoacyl-CoA + CoA. It participates in lipid metabolism; fatty acid beta-oxidation. Functionally, catalyzes the final step of fatty acid oxidation in which acetyl-CoA is released and the CoA ester of a fatty acid two carbons shorter is formed. The polypeptide is 3-ketoacyl-CoA thiolase (Shewanella sp. (strain W3-18-1)).